The chain runs to 61 residues: Large ribosomal subunit protein uL30 (61 aa).

Belongs to the universal ribosomal protein uL30 family. In terms of assembly, part of the 50S ribosomal subunit.

The sequence is that of Large ribosomal subunit protein uL30 from Chlorobium phaeovibrioides (strain DSM 265 / 1930) (Prosthecochloris vibrioformis (strain DSM 265)).